Here is a 199-residue protein sequence, read N- to C-terminus: Transgelin-3 (199 aa).

The region spanning 24 to 136 is the Calponin-homology (CH) domain; that stretch reads ADLENKLVDW…RTLMALGSVA (113 aa). The residue at position 163 (S163) is a Phosphoserine. One copy of the Calponin-like repeat lies at 174–199; the sequence is IGLQMGSNKGASQAGMTGYGMPRQIM. The span at 178–188 shows a compositional bias: polar residues; the sequence is MGSNKGASQAG. The tract at residues 178 to 199 is disordered; sequence MGSNKGASQAGMTGYGMPRQIM.

Belongs to the calponin family.

This Bos taurus (Bovine) protein is Transgelin-3 (TAGLN3).